The sequence spans 694 residues: Polynucleotide 3'-phosphatase ZDP (694 aa).

2 PARP-type zinc fingers span residues 50–132 and 165–247; these read VVAE…EQCG and VIAD…EVNK. Residues Cys-62, Cys-65, His-93, Cys-96, Cys-177, Cys-180, His-208, and Cys-211 each coordinate Zn(2+). A disordered region spans residues 266–331; that stretch reads AIADNELTEE…SPDSSKVISE (66 aa). Positions 302–321 are enriched in basic and acidic residues; it reads ESKKPASDEISEQKTKDVKN. Positions 322–331 are enriched in polar residues; it reads SPDSSKVISE. Residues 328–410 form a PARP-type 3 zinc finger; it reads VISEYAKSSR…ALKELVQQCG (83 aa). Cys-340, Cys-343, His-371, and Cys-374 together coordinate Zn(2+).

It in the C-terminal section; belongs to the DNA 3' phosphatase family. In terms of assembly, interacts with ROS1 (via the central region). Binds to XRCC1.

The protein resides in the nucleus. It localises to the nucleoplasm. It catalyses the reaction a 3'end (2'-deoxyribonucleotide 3'-phosphate)-DNA + H2O = a 3'-end 2'-deoxyribonucleotide-DNA + phosphate. Activated by the presence of DNA. Stimulated by XRCC1. Nick-sensing 3'-phosphoesterase involved in a base excision repair pathway required for active DNA demethylation. The N-terminal DNA-binding domain binds specifically to gap sites and sharply bends the target DNA. Lacks 5'-kinase activity but is capable of 3'-phosphoglycolate end processing. Inactive on 3'-alpha,beta-unsaturated aldehyde (3'-dRP). Protects partially genes from transcriptional silencing by preventing promoter DNA hypermethylation. The polypeptide is Polynucleotide 3'-phosphatase ZDP (ZDP) (Arabidopsis thaliana (Mouse-ear cress)).